A 329-amino-acid chain; its full sequence is GTP 3',8-cyclase (329 aa).

Positions 8 to 234 constitute a Radical SAM core domain; that stretch reads AFARKFYYLR…QLRQRSDGPA (227 aa). Residue Arg-17 coordinates GTP. Cys-24 and Cys-28 together coordinate [4Fe-4S] cluster. Position 30 (Tyr-30) interacts with S-adenosyl-L-methionine. Residue Cys-31 participates in [4Fe-4S] cluster binding. Arg-68 contributes to the GTP binding site. Residue Gly-72 coordinates S-adenosyl-L-methionine. Position 99 (Thr-99) interacts with GTP. Ser-123 is a binding site for S-adenosyl-L-methionine. Position 160 (Lys-160) interacts with GTP. Met-194 provides a ligand contact to S-adenosyl-L-methionine. The [4Fe-4S] cluster site is built by Cys-257 and Cys-260. Residue 262–264 coordinates GTP; sequence RLR. Cys-274 contacts [4Fe-4S] cluster.

This sequence belongs to the radical SAM superfamily. MoaA family. Monomer and homodimer. Requires [4Fe-4S] cluster as cofactor.

It catalyses the reaction GTP + AH2 + S-adenosyl-L-methionine = (8S)-3',8-cyclo-7,8-dihydroguanosine 5'-triphosphate + 5'-deoxyadenosine + L-methionine + A + H(+). Its pathway is cofactor biosynthesis; molybdopterin biosynthesis. In terms of biological role, catalyzes the cyclization of GTP to (8S)-3',8-cyclo-7,8-dihydroguanosine 5'-triphosphate. The chain is GTP 3',8-cyclase from Salmonella paratyphi B (strain ATCC BAA-1250 / SPB7).